A 622-amino-acid polypeptide reads, in one-letter code: MAIQTQLPCDGDGVCMRCQVTPPSEETLTCGTCVTPWHVSCLLPESLASSTGDWECPDCSGVVVPSAAPGTGISGPESSGSVLVAAIRAIQADVTLTEAEKAKKRQRLMSGGGDDGVDDEEKKKLEIFCSICIQLPERPVTTPCGHNFCLKCFEKWAVGQGKLTCMICRSKIPRHVAKNPRINLALVSAIRLANVTKCSGEATAAKVHHIIRNQDRPDKAFTTERAVKTGKANAASGKFFVTIPRDHFGPIPAANDVTRNQGVLVGESWEDRQECRQWGVHFPHVAGIAGQAAVGAQSVALSGGYDDDEDHGEWFLYTGSGGRDLSGNKRVNKIQSSDQAFKNMNEALRLSCKMGYPVRVVRSWKEKRSAYAPAEGVRYDGVYRIEKCWSNVGVQGLHKMCRYLFVRCDNEPAPWTSDEHGDRPRPLPDVPELENATDLFVRKESPSWGFDEAEGRWKWMKSPPVSRMALDTEERKKNKRAKKGNNAMKARLLKEFSCQICRKVLSLPVTTPCAHNFCKACLEAKFAGITQLRDRSNGVRKLRAKKNIMTCPCCTTDLSEFLQNPQVNREMMEIIENFKKSEEEAEVAESSNISEEEEEESEPPTKKIKMDNNSVGDTSLSA.

The PHD-type zinc-finger motif lies at 12-62 (DGVCMRCQVTPPSEETLTCGTCVTPWHVSCLLPESLASSTGDWECPDCSGV). The RING-type 1 zinc-finger motif lies at 129 to 169 (CSICIQLPERPVTTPCGHNFCLKCFEKWAVGQGKLTCMICR). A YDG domain is found at 258–407 (TRNQGVLVGE…HKMCRYLFVR (150 aa)). Residues 498–555 (CQICRKVLSLPVTTPCAHNFCKACLEAKFAGITQLRDRSNGVRKLRAKKNIMTCPCCT) form an RING-type 2 zinc finger. Residues 566–602 (QVNREMMEIIENFKKSEEEAEVAESSNISEEEEEESE) adopt a coiled-coil conformation. Positions 579-622 (KKSEEEAEVAESSNISEEEEEESEPPTKKIKMDNNSVGDTSLSA) are disordered. The segment covering 611–622 (DNNSVGDTSLSA) has biased composition (polar residues).

It is found in the nucleus. It carries out the reaction S-ubiquitinyl-[E2 ubiquitin-conjugating enzyme]-L-cysteine + [acceptor protein]-L-lysine = [E2 ubiquitin-conjugating enzyme]-L-cysteine + N(6)-ubiquitinyl-[acceptor protein]-L-lysine.. It participates in protein modification; protein ubiquitination. Its function is as follows. E3 ubiquitin-protein ligase. May participate in CpG methylation-dependent transcriptional regulation. In Arabidopsis thaliana (Mouse-ear cress), this protein is Putative E3 ubiquitin-protein ligase ORTHRUS 4 (ORTH4).